A 331-amino-acid chain; its full sequence is tRNA U34 carboxymethyltransferase (331 aa).

Residues lysine 91, tryptophan 105, lysine 110, glycine 130, 152-154 (DPS), 181-182 (IE), methionine 196, tyrosine 200, and arginine 315 contribute to the carboxy-S-adenosyl-L-methionine site.

It belongs to the class I-like SAM-binding methyltransferase superfamily. CmoB family. As to quaternary structure, homotetramer.

The enzyme catalyses carboxy-S-adenosyl-L-methionine + 5-hydroxyuridine(34) in tRNA = 5-carboxymethoxyuridine(34) in tRNA + S-adenosyl-L-homocysteine + H(+). Functionally, catalyzes carboxymethyl transfer from carboxy-S-adenosyl-L-methionine (Cx-SAM) to 5-hydroxyuridine (ho5U) to form 5-carboxymethoxyuridine (cmo5U) at position 34 in tRNAs. In Shewanella baltica (strain OS185), this protein is tRNA U34 carboxymethyltransferase.